We begin with the raw amino-acid sequence, 635 residues long: Two-component response regulator ARR18 (635 aa).

One can recognise a Response regulatory domain in the interval 19 to 133; it reads RVLAVDDNPT…ELQNIWHHVV (115 aa). Asp70 bears the 4-aspartylphosphate mark. Disordered regions lie at residues 144–196 and 323–342; these read LPPS…KKPR and IQQGHHQNSSNSANPFGTYH. The span at 166–186 shows a compositional bias: acidic residues; the sequence is SGDEDDSDREEDDGEGSEQDG. Residues 193–196 carry the Nuclear localization signal motif; the sequence is KKPR. Residues 196-246 constitute a DNA-binding region (myb-like GARP); it reads RVVWSQELHQKFVSAVQQLGLDKAVPKKILDLMSIEGLTRENVASHLQKYR.

It belongs to the ARR family. Type-B subfamily. Binds the target DNA as a monomer. Two-component system major event consists of a His-to-Asp phosphorelay between a sensor histidine kinase (HK) and a response regulator (RR). In plants, the His-to-Asp phosphorelay involves an additional intermediate named Histidine-containing phosphotransfer protein (HPt). This multistep phosphorelay consists of a His-Asp-His-Asp sequential transfer of a phosphate group between first a His and an Asp of the HK protein, followed by the transfer to a conserved His of the HPt protein and finally the transfer to an Asp in the receiver domain of the RR protein. As to expression, predominantly expressed in young leaf tissue developing anthers, and siliques.

The protein localises to the nucleus. Transcriptional activator that binds specifically to the DNA sequence 5'-[AG]GATT-3'. Functions as a response regulator involved in His-to-Asp phosphorelay signal transduction system. Phosphorylation of the Asp residue in the receiver domain activates the ability of the protein to promote the transcription of target genes. Could directly activate some type-A response regulators in response to cytokinins. The chain is Two-component response regulator ARR18 (ARR18) from Arabidopsis thaliana (Mouse-ear cress).